A 1205-amino-acid polypeptide reads, in one-letter code: Centrosome and spindle pole associated protein 1 (1205 aa).

Coiled-coil stretches lie at residues 12-34 and 87-108; these read QKAK…EMKG and KLKE…TQAK. The tract at residues 16–37 is disordered; sequence LAKDKAELESDPPYMEMKGKAS. Over residues 158–173 the composition is skewed to basic and acidic residues; it reads STEKVRQVEKNIEPKS. 3 disordered regions span residues 158 to 187, 222 to 277, and 380 to 467; these read STEK…KSDL, SRRP…PGVS, and QQKK…GSTL. Positions 176–187 are enriched in polar residues; it reads NKNPISQGKSDL. Basic and acidic residues-rich tracts occupy residues 222-233 and 257-275; these read SRRPLKQTKEEV and ANGE…RDPG. Residues 357 to 391 adopt a coiled-coil conformation; that stretch reads EDRELTKRRKEKYRQELLEQIAEQQKKKRREKDLA. 2 stretches are compositionally biased toward basic and acidic residues: residues 401–410 and 417–428; these read DPEKSPDRLK and RHFEEMPPERPR. Ser405 is modified (phosphoserine). Residues 433–447 are compositionally biased toward pro residues; the sequence is TPPPPFSAPSSPSVP. The stretch at 574–618 forms a coiled coil; that stretch reads STQSLQSYQEALQEQIREREARRKKERLEKEEYEAKLEAEMRIYN. Positions 677-704 are disordered; that stretch reads AENLEDSANKNSGPLQTQSSPFARGNTF. A compositionally biased stretch (polar residues) spans 685–697; that stretch reads NKNSGPLQTQSSP. A coiled-coil region spans residues 724–813; sequence RFQIEEKRQR…EKHNLQLQHY (90 aa). A phosphoserine mark is found at Ser850 and Ser869. The segment at 862 to 881 is disordered; sequence SSMSRAQSPPVPARKNQLRA. The stretch at 874–911 forms a coiled coil; that stretch reads ARKNQLRAEEEKKNVIMELSEMRKQLRSEERRLQGRLL. Residue Ser915 is modified to Phosphoserine. Positions 993-1014 form a coiled coil; that stretch reads QQQALLREQQKRLNRIKMRRDA. 3 disordered regions span residues 1086–1105, 1124–1169, and 1182–1205; these read GLDF…SLKS, RLTE…RPGT, and NEEQ…AAHA. Residues 1124–1134 show a composition bias toward basic and acidic residues; it reads RLTEQQKKPTN. The span at 1135–1145 shows a compositional bias: acidic residues; that stretch reads TDDEGSLVDPD. Residues 1146-1156 show a composition bias toward basic and acidic residues; that stretch reads DIMRHLSDDGR.

Interacts with PLEKHG6. Interacts with ARMC9, TOGARAM1, CCDC66, CEP104 and CEP290. In terms of processing, phosphorylated. Phosphorylation increases in colcemide-treated cells.

It is found in the cytoplasm. It localises to the cytoskeleton. The protein resides in the microtubule organizing center. Its subcellular location is the centrosome. The protein localises to the spindle. It is found in the spindle pole. It localises to the cell projection. The protein resides in the cilium. Functionally, may play a role in cell-cycle-dependent microtubule organization. In Mus musculus (Mouse), this protein is Centrosome and spindle pole associated protein 1 (Cspp1).